Reading from the N-terminus, the 518-residue chain is Wax ester synthase/diacylglycerol acyltransferase 6 (518 aa).

Over residues 1-17 (MEIKTRRDTSETSVRKD) the composition is skewed to basic and acidic residues. The interval 1-29 (MEIKTRRDTSETSVRKDDEEEVEEEQPLS) is disordered. At 1–213 (MEIKTRRDTS…LMAGSRGDSR (213 aa)) the chain is on the cytoplasmic side. The active-site Proton acceptor is the His-163. The interval 185-205 (PDELPSLPNQNRSSSRSSRLM) is disordered. A helical membrane pass occupies residues 214-234 (FLWLVMVIWSAIMLVLNTVCD). Residues 235-518 (ALEFIATTMF…VQERDSRSLD (284 aa)) lie on the Lumenal side of the membrane. N-linked (GlcNAc...) asparagine glycosylation occurs at Asn-430.

In the N-terminal section; belongs to the long-chain O-acyltransferase family. Expressed in roots, stems, leaves, flowers and siliques.

It is found in the cell membrane. Its subcellular location is the endoplasmic reticulum membrane. The protein localises to the golgi apparatus membrane. It carries out the reaction an acyl-CoA + a 1,2-diacyl-sn-glycerol = a triacyl-sn-glycerol + CoA. The enzyme catalyses a long chain fatty alcohol + a fatty acyl-CoA = a wax ester + CoA. Its pathway is glycerolipid metabolism; triacylglycerol biosynthesis. It participates in lipid metabolism. Functionally, bifunctional wax ester synthase/diacylglycerol acyltransferase that uses acyl-CoAs with 16, 18 and 20 carbons as substrates, preferably in combination with 16:0ol alcohol. Involved in cuticular wax biosynthesis. The protein is Wax ester synthase/diacylglycerol acyltransferase 6 of Arabidopsis thaliana (Mouse-ear cress).